Here is a 549-residue protein sequence, read N- to C-terminus: Glucose-6-phosphate isomerase (549 aa).

The active-site Proton donor is the glutamate 355. Active-site residues include histidine 386 and lysine 514.

Belongs to the GPI family.

Its subcellular location is the cytoplasm. It carries out the reaction alpha-D-glucose 6-phosphate = beta-D-fructose 6-phosphate. It participates in carbohydrate biosynthesis; gluconeogenesis. The protein operates within carbohydrate degradation; glycolysis; D-glyceraldehyde 3-phosphate and glycerone phosphate from D-glucose: step 2/4. Catalyzes the reversible isomerization of glucose-6-phosphate to fructose-6-phosphate. This Klebsiella pneumoniae subsp. pneumoniae (strain ATCC 700721 / MGH 78578) protein is Glucose-6-phosphate isomerase.